The following is a 213-amino-acid chain: LexA repressor 2 (213 aa).

The segment at residues 27–47 is a DNA-binding region (H-T-H motif); that stretch reads QTEIARAFGFKGVRAAQYHLE. Residues Ser133 and Lys170 each act as for autocatalytic cleavage activity in the active site.

Belongs to the peptidase S24 family. Homodimer.

It catalyses the reaction Hydrolysis of Ala-|-Gly bond in repressor LexA.. Represses a number of genes involved in the response to DNA damage (SOS response), including recA and lexA. In the presence of single-stranded DNA, RecA interacts with LexA causing an autocatalytic cleavage which disrupts the DNA-binding part of LexA, leading to derepression of the SOS regulon and eventually DNA repair. This Xanthomonas oryzae pv. oryzae (strain KACC10331 / KXO85) protein is LexA repressor 2.